Consider the following 151-residue polypeptide: UPF0178 protein PMI1258 (151 aa).

The protein belongs to the UPF0178 family.

The chain is UPF0178 protein PMI1258 from Proteus mirabilis (strain HI4320).